We begin with the raw amino-acid sequence, 127 residues long: Fluoride-specific ion channel FluC (127 aa).

Transmembrane regions (helical) follow at residues 3-23, 36-56, 72-92, and 101-121; these read ALLL…LLGV, GTFA…GGLA, VGAL…ALMI, and FAYS…GLLL. Na(+) is bound by residues Gly76 and Thr79.

Belongs to the fluoride channel Fluc/FEX (TC 1.A.43) family.

It localises to the cell inner membrane. It catalyses the reaction fluoride(in) = fluoride(out). Na(+) is not transported, but it plays an essential structural role and its presence is essential for fluoride channel function. Functionally, fluoride-specific ion channel. Important for reducing fluoride concentration in the cell, thus reducing its toxicity. This chain is Fluoride-specific ion channel FluC, found in Phenylobacterium zucineum (strain HLK1).